A 635-amino-acid polypeptide reads, in one-letter code: Biosynthetic arginine decarboxylase (635 aa).

Lys100 carries the post-translational modification N6-(pyridoxal phosphate)lysine. 282–292 (IDIGGGLGVDY) is a binding site for substrate.

The protein belongs to the Orn/Lys/Arg decarboxylase class-II family. SpeA subfamily. It depends on Mg(2+) as a cofactor. Pyridoxal 5'-phosphate serves as cofactor.

It catalyses the reaction L-arginine + H(+) = agmatine + CO2. Its pathway is amine and polyamine biosynthesis; agmatine biosynthesis; agmatine from L-arginine: step 1/1. Its function is as follows. Catalyzes the biosynthesis of agmatine from arginine. The protein is Biosynthetic arginine decarboxylase of Pelobacter propionicus (strain DSM 2379 / NBRC 103807 / OttBd1).